Consider the following 103-residue polypeptide: Large ribosomal subunit protein bL21 (103 aa).

The protein belongs to the bacterial ribosomal protein bL21 family. Part of the 50S ribosomal subunit. Contacts protein L20.

Its function is as follows. This protein binds to 23S rRNA in the presence of protein L20. In Idiomarina loihiensis (strain ATCC BAA-735 / DSM 15497 / L2-TR), this protein is Large ribosomal subunit protein bL21.